Here is a 248-residue protein sequence, read N- to C-terminus: MAADPIHQFQITKLFTLGHVGGQEIAFTNSSAYMFGTVALIAILMLVPGRQLVPGRLQSIAELSYEFVANMIRSTAGKEGLKFFPLVFSLFMFIAVSNLIGIVPYTFTVSSHLIVTVALALLVFFTVLIYGFSKNGLKFFKLFVPSGVPIYILPLVVFIEVISFFLKPVSHSVRLFANMLAGHIALKVFASFVAMLGALGVVGWFGAVLPLGLTIALTALELLVAFLQAYVFAILTCIYLNDAIHPGH.

6 consecutive transmembrane segments (helical) span residues 27–47, 83–103, 113–133, 142–162, 192–212, and 215–235; these read FTNSSAYMFGTVALIAILMLV, FFPLVFSLFMFIAVSNLIGIV, LIVTVALALLVFFTVLIYGFS, LFVPSGVPIYILPLVVFIEVI, FVAMLGALGVVGWFGAVLPLG, and IALTALELLVAFLQAYVFAIL.

Belongs to the ATPase A chain family. F-type ATPases have 2 components, CF(1) - the catalytic core - and CF(0) - the membrane proton channel. CF(1) has five subunits: alpha(3), beta(3), gamma(1), delta(1), epsilon(1). CF(0) has four main subunits: a, b, b' and c.

It is found in the cell inner membrane. In terms of biological role, key component of the proton channel; it plays a direct role in the translocation of protons across the membrane. The polypeptide is ATP synthase subunit a (Rhodopseudomonas palustris (strain ATCC BAA-98 / CGA009)).